The primary structure comprises 119 residues: MASETEPRPLGTFECQLCALSAPYSYVGQKPPDTQAVVLLEESYIMKDPFSSDKARFLVLGSRCSVCSRLVCVGPDCSLFYSKRVCLPCVQENMSAFPQEIQQDVEKRKSTSKKHSNRP.

It belongs to the CDPF1 family.

The chain is Cysteine-rich DPF motif domain-containing protein 1 (Cdpf1) from Mus musculus (Mouse).